A 270-amino-acid chain; its full sequence is Methionine-rich protein (270 aa).

A signal peptide spans 1-18; sequence MLSLWAIGLLGLLNQVEA. Residues 31–52 are compositionally biased toward polar residues; the sequence is QRSAQFSSSGWGTSPAAQNPWS. Positions 31–95 are disordered; sequence QRSAQFSSSG…MPGSMPGAMP (65 aa). A compositionally biased stretch (low complexity) spans 56–95; it reads PMPNTNMPNMNTGSLPGSMPGAMPGSMPGAMPGSMPGAMP.

In terms of tissue distribution, component of the acid-soluble organic matrix of calcified layers of the shell (at protein level).

It is found in the secreted. This Lottia gigantea (Giant owl limpet) protein is Methionine-rich protein.